The chain runs to 409 residues: 5-aminolevulinate synthase (409 aa).

Substrate contacts are provided by arginine 21 and serine 136. Pyridoxal 5'-phosphate contacts are provided by serine 188, histidine 216, and threonine 244. Lysine 247 is an active-site residue. Lysine 247 is modified (N6-(pyridoxal phosphate)lysine). Residues threonine 276 and threonine 277 each contribute to the pyridoxal 5'-phosphate site. Residue threonine 362 participates in substrate binding.

Belongs to the class-II pyridoxal-phosphate-dependent aminotransferase family. As to quaternary structure, homodimer. Requires pyridoxal 5'-phosphate as cofactor.

The enzyme catalyses succinyl-CoA + glycine + H(+) = 5-aminolevulinate + CO2 + CoA. It functions in the pathway porphyrin-containing compound metabolism; protoporphyrin-IX biosynthesis; 5-aminolevulinate from glycine: step 1/1. In Bradyrhizobium diazoefficiens (strain JCM 10833 / BCRC 13528 / IAM 13628 / NBRC 14792 / USDA 110), this protein is 5-aminolevulinate synthase (hemA).